A 467-amino-acid chain; its full sequence is H(+)/Cl(-) exchange transporter ClcA (467 aa).

At 1–30 (MKSQTIPTRRVRGFRRAAVIRQLLSRDKTP) the chain is on the cytoplasmic side. The chain crosses the membrane as a helical span at residues 31 to 67 (LTILLLASLTGVLAGLAGVAFEKAVAWVTAHRIEGLA). At 68–74 (QVAHIPW) the chain is on the periplasmic side. The helical transmembrane segment at 75–98 (LVWLLAFLFSALLAMVGYFLVRRF) threads the bilayer. Residues 99 to 106 (APEAGGSG) are Cytoplasmic-facing. The Selectivity filter part_1 motif lies at 104–108 (GSGIP). Ser-105 is a chloride binding site. Positions 107–114 (IPEIEGAL) form an intramembrane region, helical. The Cytoplasmic segment spans residues 115 to 121 (EELRPVR). The helical transmembrane segment at 122-139 (WWRVLPVKFFGGMGTLGA) threads the bilayer. Residues 140-145 (GMVLGR) are Periplasmic-facing. The Selectivity filter part_2 signature appears at 144 to 148 (GREGP). Residues 146 to 164 (EGPMVQMGGNIGRMVLDIF) form a helical membrane-spanning segment. Over 165–174 (HRPDAEARHT) the chain is Cytoplasmic. Intramembrane regions (helical) lie at residues 175–187 (LLATGAAAGLAAA) and 191–199 (PLAGILFII). Residues 200–212 (EEMRTQFHYNLIS) are Cytoplasmic-facing. A helical transmembrane segment spans residues 213–230 (IKAVFTGVIMSTIVFRIF). Residues 231-250 (NGEKSVIEVGQLTDAPVYTL) lie on the Periplasmic side of the membrane. Residues 251–279 (WLYLLLGIIFGAVGPLFNRLVLGMQDVFA) traverse the membrane as a helical segment. At 280–285 (RIHGGN) the chain is on the cytoplasmic side. Residues 286 to 307 (TTRWVLLGGAIGGACGLLALWE) traverse the membrane as a helical segment. Residues 308-327 (PAAAGGGFGLIPIAAAGNFT) are Periplasmic-facing. The helical transmembrane segment at 328 to 347 (VGMLLFIFIARVVTTVFCFS) threads the bilayer. Residues 348–352 (SGAPG) lie on the Cytoplasmic side of the membrane. The Selectivity filter part_3 signature appears at 353–357 (GIFAP). Residues 353–374 (GIFAPMLALGTLLGSAFGMACA) traverse the membrane as a helical segment. Residues Ile-354 and Phe-355 each contribute to the chloride site. Over 375-384 (AWFPQWHLQA) the chain is Periplasmic. The helical intramembrane region spans 385–399 (GTFAIAGMGALLAAS). An intramembrane region (note=Loop between two helices) is located at residues 400–402 (VRA). The segment at residues 403–414 (PITGIVLVLEMT) is an intramembrane region (helical). Positions 415–419 (DNYQL) form an intramembrane region, note=Loop between two helices. A helical membrane pass occupies residues 420–436 (ILPMIITCLGATLLAQF). Residues 437–467 (LGGKPLYSTILARTLAKQEAERQAQADGRNT) are Cytoplasmic-facing. Tyr-443 serves as a coordination point for chloride.

This sequence belongs to the chloride channel (TC 2.A.49) family. ClcA subfamily. As to quaternary structure, homodimer.

Its subcellular location is the cell inner membrane. The catalysed reaction is 2 chloride(in) + H(+)(out) = 2 chloride(out) + H(+)(in). Its function is as follows. Proton-coupled chloride transporter. Functions as antiport system and exchanges two chloride ions for 1 proton. Probably acts as an electrical shunt for an outwardly-directed proton pump that is linked to amino acid decarboxylation, as part of the extreme acid resistance (XAR) response. The polypeptide is H(+)/Cl(-) exchange transporter ClcA (Cronobacter sakazakii (strain ATCC BAA-894) (Enterobacter sakazakii)).